Reading from the N-terminus, the 549-residue chain is RNA-induced transcriptional silencing complex protein tas3 (549 aa).

5 disordered regions span residues Lys-89–Ser-111, Asp-126–Ile-184, Ile-202–Ser-225, Leu-298–Lys-361, and Ala-381–Ser-430. Residues Leu-298 to Gln-307 are compositionally biased toward polar residues. Basic and acidic residues-rich tracts occupy residues Tyr-328 to Lys-361 and Ser-403 to Thr-416. The segment covering Leu-419–Ser-430 has biased composition (polar residues).

As to quaternary structure, ago1, chp1 and tas3 interact to form the core of the RNA-induced transcriptional silencing (RITS) complex. The RITS complex interacts with the RDRC complex via interaction between ago1 and hrr1. Clr4 has a role in mediating this interaction.

Its subcellular location is the nucleus. The protein localises to the cytoplasm. It localises to the cytoskeleton. The protein resides in the microtubule organizing center. It is found in the spindle pole body. Has a role in the RNA interference (RNAi) pathway which is important for heterochromatin formation and accurate chromosome segregation. A member of the RNA-induced transcriptional silencing (RITS) complex which is involved in the biosynthesis of dsRNA from primer siRNAs provided by the RNA-directed RNA polymerase (RDRC) complex. This Schizosaccharomyces pombe (strain 972 / ATCC 24843) (Fission yeast) protein is RNA-induced transcriptional silencing complex protein tas3 (tas3).